We begin with the raw amino-acid sequence, 62 residues long: Cytotoxin 7 (62 aa).

The N-terminal stretch at 1–2 (YT) is a signal peptide. Disulfide bonds link Cys-5–Cys-23, Cys-16–Cys-40, Cys-44–Cys-55, and Cys-56–Cys-61.

This sequence belongs to the three-finger toxin family. Short-chain subfamily. Type IA cytotoxin sub-subfamily. In terms of assembly, monomer in solution; Homodimer and oligomer in the presence of negatively charged lipids forming a pore with a size ranging between 20 and 30 Angstroms. As to expression, expressed by the venom gland.

Its subcellular location is the secreted. It localises to the target cell membrane. In terms of biological role, shows cytolytic activity on many different cells by forming pore in lipid membranes. In vivo, increases heart rate or kills the animal by cardiac arrest. In addition, it binds to heparin with high affinity, interacts with Kv channel-interacting protein 1 (KCNIP1) in a calcium-independent manner, and binds to integrin alpha-V/beta-3 (ITGAV/ITGB3) with moderate affinity. In Naja sputatrix (Malayan spitting cobra), this protein is Cytotoxin 7.